Here is a 256-residue protein sequence, read N- to C-terminus: 5-keto-4-deoxy-D-glucarate aldolase (256 aa).

The Proton acceptor role is filled by His50. Gln151 serves as a coordination point for substrate. Glu153 contacts Mg(2+). Positions 178 and 179 each coordinate substrate. Residue Asp179 coordinates Mg(2+).

Belongs to the HpcH/HpaI aldolase family. KDGluc aldolase subfamily. In terms of assembly, homohexamer; trimer of dimers. Mg(2+) serves as cofactor.

The catalysed reaction is 5-dehydro-4-deoxy-D-glucarate = 2-hydroxy-3-oxopropanoate + pyruvate. The enzyme catalyses 2-dehydro-3-deoxy-D-glucarate = 2-hydroxy-3-oxopropanoate + pyruvate. It participates in carbohydrate acid metabolism; galactarate degradation; D-glycerate from galactarate: step 2/3. Functionally, catalyzes the reversible retro-aldol cleavage of both 5-keto-4-deoxy-D-glucarate and 2-keto-3-deoxy-D-glucarate to pyruvate and tartronic semialdehyde. The polypeptide is 5-keto-4-deoxy-D-glucarate aldolase (Shigella boydii serotype 4 (strain Sb227)).